Reading from the N-terminus, the 107-residue chain is Prokineticin-2 (107 aa).

A signal peptide spans 1–26; it reads MEDPRCAPLLLLLLLPLLLTPPAGDA. Cystine bridges form between Cys33-Cys45, Cys39-Cys57, Cys44-Cys85, Cys67-Cys93, and Cys87-Cys103.

This sequence belongs to the AVIT (prokineticin) family. In terms of tissue distribution, expressed at high levels in testis and at lower levels in brain, lung, ovary, spleen, thymus and uterus.

The protein resides in the secreted. In terms of biological role, may function as an output molecule from the suprachiasmatic nucleus (SCN) that transmits behavioral circadian rhythm. May also function locally within the SCN to synchronize output. Potently contracts gastrointestinal (GI) smooth muscle. The sequence is that of Prokineticin-2 (Prok2) from Rattus norvegicus (Rat).